Here is a 144-residue protein sequence, read N- to C-terminus: Large ribosomal subunit protein uL14 (144 aa).

This sequence belongs to the universal ribosomal protein uL14 family. Part of the 50S ribosomal subunit. Forms a cluster with proteins L3 and L24e, part of which may contact the 16S rRNA in 2 intersubunit bridges.

Functionally, binds to 23S rRNA. Forms part of two intersubunit bridges in the 70S ribosome. This chain is Large ribosomal subunit protein uL14, found in Caldivirga maquilingensis (strain ATCC 700844 / DSM 13496 / JCM 10307 / IC-167).